The chain runs to 315 residues: Cytochrome c biogenesis protein CcsA (315 aa).

8 consecutive transmembrane segments (helical) span residues 15–35 (SCFL…GFGG), 39–59 (FSFT…LQLI), 73–93 (LYES…YIEV), 97–117 (TLFL…FTDF), 144–164 (VMIA…AYLV), 222–242 (TIGI…IWAN), 257–277 (WAFI…VGGW), and 283–303 (ALVA…VNLL).

The protein belongs to the CcmF/CycK/Ccl1/NrfE/CcsA family. May interact with Ccs1.

Its subcellular location is the plastid. It localises to the chloroplast thylakoid membrane. Required during biogenesis of c-type cytochromes (cytochrome c6 and cytochrome f) at the step of heme attachment. The polypeptide is Cytochrome c biogenesis protein CcsA (Chlorella vulgaris (Green alga)).